The sequence spans 470 residues: 3-isopropylmalate dehydratase large subunit (470 aa).

Cys349, Cys409, and Cys412 together coordinate [4Fe-4S] cluster.

It belongs to the aconitase/IPM isomerase family. LeuC type 1 subfamily. As to quaternary structure, heterodimer of LeuC and LeuD. [4Fe-4S] cluster is required as a cofactor.

It carries out the reaction (2R,3S)-3-isopropylmalate = (2S)-2-isopropylmalate. It functions in the pathway amino-acid biosynthesis; L-leucine biosynthesis; L-leucine from 3-methyl-2-oxobutanoate: step 2/4. In terms of biological role, catalyzes the isomerization between 2-isopropylmalate and 3-isopropylmalate, via the formation of 2-isopropylmaleate. In Methylobacterium radiotolerans (strain ATCC 27329 / DSM 1819 / JCM 2831 / NBRC 15690 / NCIMB 10815 / 0-1), this protein is 3-isopropylmalate dehydratase large subunit.